Reading from the N-terminus, the 311-residue chain is Putative ABC transporter ATP-binding protein MG467 (311 aa).

An ABC transporter domain is found at 84–310 (ITINKMWKNV…IVSNQLVRPL (227 aa)). 122–129 (GSSGSGKT) contacts ATP.

The protein belongs to the ABC transporter superfamily.

The chain is Putative ABC transporter ATP-binding protein MG467 from Mycoplasma genitalium (strain ATCC 33530 / DSM 19775 / NCTC 10195 / G37) (Mycoplasmoides genitalium).